We begin with the raw amino-acid sequence, 898 residues long: Putative aconitate hydratase, cytoplasmic (898 aa).

Residues glutamine 90 and 209 to 211 (DSH) contribute to the substrate site. Positions 441, 507, and 510 each coordinate [4Fe-4S] cluster. Residues arginine 540, arginine 545, arginine 703, and 784–785 (SR) contribute to the substrate site.

The protein belongs to the aconitase/IPM isomerase family. It depends on [4Fe-4S] cluster as a cofactor.

Its subcellular location is the cytoplasm. The catalysed reaction is citrate = D-threo-isocitrate. It functions in the pathway carbohydrate metabolism; glyoxylate and dicarboxylate metabolism. Catalyzes the isomerization of citrate to isocitrate via cis-aconitate. This Oryza sativa subsp. japonica (Rice) protein is Putative aconitate hydratase, cytoplasmic.